We begin with the raw amino-acid sequence, 353 residues long: C-X-C chemokine receptor type 4 (353 aa).

Residues 1–22 (MEELHIYPSDNYTEEDLGSGDY) form an important for chemokine binding and signaling region. Topologically, residues 1–39 (MEELHIYPSDNYTEEDLGSGDYDSMKEPCFREENAHFNR) are extracellular. Position 7 is a sulfotyrosine (Y7). N-linked (GlcNAc...) asparagine glycosylation occurs at N11. A Sulfotyrosine modification is found at Y12. O-linked (Xyl...) (chondroitin sulfate) serine glycosylation occurs at S19. The residue at position 22 (Y22) is a Sulfotyrosine. Disulfide bonds link C29-C275 and C110-C187. A helical transmembrane segment spans residues 40–64 (IFLPTVYSIIFLTGIVGNGLVILVM). Topologically, residues 65-78 (GYQKKLRSMTDKYR) are cytoplasmic. A helical membrane pass occupies residues 79–100 (LHLSVADLLFVLTLPFWAVEAV). A chemokine binding region spans residues 95–98 (WAVE). The Extracellular portion of the chain corresponds to 101–111 (ANWYFGNFLCK). The chain crosses the membrane as a helical span at residues 112–131 (AVHVIYTVNLYSSVLILAFI). A chemokine binding region spans residues 114–118 (HVIYT). The Cytoplasmic portion of the chain corresponds to 132 to 155 (SLDRYLAIVHATNSQRPRKLLAEK). The Important for signaling motif lies at 134–136 (DRY). The segment at 136 to 148 (YLAIVHATNSQRP) is involved in dimerization; when bound to chemokine. The helical transmembrane segment at 156 to 175 (VVYVGVWIPALLLTIPDFIF) threads the bilayer. Topologically, residues 176-196 (ANVREADDRYICDRFYPNDSW) are extracellular. The interval 187 to 191 (CDRFY) is chemokine binding, important for signaling. An involved in dimerization region spans residues 192-211 (PNDSWLVVFQFQHIMVGLIL). The helical transmembrane segment at 197-217 (LVVFQFQHIMVGLILPGIVIL) threads the bilayer. Residues 218–242 (SCYCIIISKLSHSKGYQKRKALKTT) are Cytoplasmic-facing. The helical transmembrane segment at 243–262 (VILILAFFACWLPYYIGISI) threads the bilayer. The Extracellular segment spans residues 263–283 (DSFILLEIIKQGCEFEKTVHK). The involved in dimerization stretch occupies residues 267–269 (LLE). A helical membrane pass occupies residues 284 to 303 (WISITEALAFFHCCLNPILY). Topologically, residues 304 to 353 (AFLGAKFKTSAQHALTSVSRGSSLKILSKGKRGGHSSVSTESESSSFHSS) are cytoplasmic. Residues S320 and S322 each carry the phosphoserine modification. S325 and S326 each carry phosphoserine; by PKC and GRK6. Positions 330-353 (LSKGKRGGHSSVSTESESSSFHSS) are disordered. S331 is modified (phosphoserine; by GRK6). A Glycyl lysine isopeptide (Lys-Gly) (interchain with G-Cter in ubiquitin) cross-link involves residue K332. Over residues 338-353 (HSSVSTESESSSFHSS) the composition is skewed to low complexity. S340 is modified (phosphoserine; by GRK6). S349 and S352 each carry phosphoserine.

It belongs to the G-protein coupled receptor 1 family. As to quaternary structure, monomer. Can form homodimers. Interacts with CD164. Interacts with ARRB2; the interaction is dependent on the C-terminal phosphorylation of CXCR4 and allows activation of MAPK1 and MAPK3. Interacts with ARR3; the interaction is dependent on the C-terminal phosphorylation of CXCR4 and modulates calcium mobilization. Interacts with RNF113A; the interaction, enhanced by CXCL12, promotes CXCR4 ubiquitination and subsequent degradation. Interacts (via the cytoplasmic C-terminal) with ITCH (via the WW domains I and II); the interaction, enhanced by CXCL12, promotes CXCR4 ubiquitination and leads to its degradation. Interacts with extracellular ubiquitin. Interacts with DBN1; this interaction is enhanced by antigenic stimulation. Following LPS binding, may form a complex with GDF5, HSP90AA1 and HSPA8. In terms of processing, phosphorylated on agonist stimulation. Rapidly phosphorylated on serine and threonine residues in the C-terminal. Phosphorylation at Ser-325 and Ser-326 leads to recruitment of ITCH, ubiquitination and protein degradation. Ubiquitinated after ligand binding, leading to its degradation. Ubiquitinated by ITCH at the cell membrane on agonist stimulation. The ubiquitin-dependent mechanism, endosomal sorting complex required for transport (ESCRT), then targets CXCR4 for lysosomal degradation. This process is dependent also on prior Ser-/Thr-phosphorylation in the C-terminal of CXCR4. Also binding of ARRB1 to STAM negatively regulates CXCR4 sorting to lysosomes though modulating ubiquitination of SFR5S. Post-translationally, sulfation is required for efficient binding of CXCL12/SDF-1alpha and promotes its dimerization. In terms of processing, O- and N-glycosylated. N-glycosylation can mask coreceptor function. The O-glycosylation chondroitin sulfate attachment does not affect interaction with CXCL12/SDF-1alpha nor its coreceptor activity.

The protein resides in the cell membrane. It is found in the cell junction. Its subcellular location is the early endosome. It localises to the late endosome. The protein localises to the lysosome. Functionally, receptor for the C-X-C chemokine CXCL12/SDF-1 that transduces a signal by increasing intracellular calcium ion levels and enhancing MAPK1/MAPK3 activation. Involved in the AKT signaling cascade. Plays a role in regulation of cell migration, e.g. during wound healing. Acts as a receptor for extracellular ubiquitin; leading to enhanced intracellular calcium ions and reduced cellular cAMP levels. Binds bacterial lipopolysaccharide (LPS) et mediates LPS-induced inflammatory response, including TNF secretion by monocytes. Involved in hematopoiesis and in cardiac ventricular septum formation. Also plays an essential role in vascularization of the gastrointestinal tract, probably by regulating vascular branching and/or remodeling processes in endothelial cells. Involved in cerebellar development. In the CNS, could mediate hippocampal-neuron survival. This Canis lupus familiaris (Dog) protein is C-X-C chemokine receptor type 4 (CXCR4).